The following is a 154-amino-acid chain: NAD(P)H-quinone oxidoreductase subunit N (154 aa).

Belongs to the complex I NdhN subunit family. In terms of assembly, NDH-1 can be composed of about 15 different subunits; different subcomplexes with different compositions have been identified which probably have different functions.

Its subcellular location is the cellular thylakoid membrane. It catalyses the reaction a plastoquinone + NADH + (n+1) H(+)(in) = a plastoquinol + NAD(+) + n H(+)(out). It carries out the reaction a plastoquinone + NADPH + (n+1) H(+)(in) = a plastoquinol + NADP(+) + n H(+)(out). Its function is as follows. NDH-1 shuttles electrons from an unknown electron donor, via FMN and iron-sulfur (Fe-S) centers, to quinones in the respiratory and/or the photosynthetic chain. The immediate electron acceptor for the enzyme in this species is believed to be plastoquinone. Couples the redox reaction to proton translocation, and thus conserves the redox energy in a proton gradient. Cyanobacterial NDH-1 also plays a role in inorganic carbon-concentration. The protein is NAD(P)H-quinone oxidoreductase subunit N of Prochlorococcus marinus (strain NATL2A).